A 183-amino-acid polypeptide reads, in one-letter code: MKLLFPIFASLMLQYQVNTEFIGLRSCLMGFGRCRDHCNVDEKEIQKCKMKKCCVGPKVVKLIKNYLQYGTPNVLNEDVQEMLKPAENSSAVIQRKHILSILPQIKSINFFANTNLVIIPNATPVNSATVSTMTSGQITYTATSAKSNTKESGDSATASPPPAPPPPNILPTPSLELEEAEEQ.

An N-terminal signal peptide occupies residues 1 to 19 (MKLLFPIFASLMLQYQVNT). 3 disulfide bridges follow: Cys-27–Cys-53, Cys-34–Cys-48, and Cys-38–Cys-54. Positions 142–183 (ATSAKSNTKESGDSATASPPPAPPPPNILPTPSLELEEAEEQ) are disordered. Positions 159 to 170 (SPPPAPPPPNIL) are enriched in pro residues.

Belongs to the beta-defensin family.

Its subcellular location is the secreted. Has antibacterial activity. This Macaca fascicularis (Crab-eating macaque) protein is Beta-defensin 129 (DEFB129).